Consider the following 291-residue polypeptide: Nucleotide-binding protein lhv_0732 (291 aa).

ATP is bound at residue 13 to 20 (GMSGAGKT). A GTP-binding site is contributed by 61-64 (DLRV).

The protein belongs to the RapZ-like family.

Its function is as follows. Displays ATPase and GTPase activities. In Lactobacillus helveticus (strain DPC 4571), this protein is Nucleotide-binding protein lhv_0732.